A 223-amino-acid chain; its full sequence is Probable Brix domain-containing ribosomal biogenesis protein (223 aa).

One can recognise a Brix domain in the interval 1-196 (MMLITTSHRP…IWIMEDGRRW (196 aa)).

Probably involved in the biogenesis of the ribosome. This is Probable Brix domain-containing ribosomal biogenesis protein from Pyrococcus furiosus (strain ATCC 43587 / DSM 3638 / JCM 8422 / Vc1).